The sequence spans 257 residues: Zinc transporter ZupT (257 aa).

Helical transmembrane passes span leucine 5–glycine 25, valine 32–methionine 52, glycine 61–leucine 81, alanine 109–valine 129, leucine 137–alanine 157, isoleucine 171–isoleucine 191, leucine 195–leucine 215, and glycine 236–isoleucine 256. Asparagine 120 and glutamate 123 together coordinate Fe(2+). Residues glutamate 123 and histidine 148 each contribute to the Zn(2+) site. 3 residues coordinate Fe(2+): asparagine 149, glutamate 152, and glutamate 181. Glutamate 152 is a Zn(2+) binding site.

The protein belongs to the ZIP transporter (TC 2.A.5) family. ZupT subfamily.

It is found in the cell inner membrane. The catalysed reaction is Zn(2+)(in) = Zn(2+)(out). Mediates zinc uptake. May also transport other divalent cations. The sequence is that of Zinc transporter ZupT from Salmonella heidelberg (strain SL476).